The following is a 433-amino-acid chain: Alpha-(1,3)-fucosyltransferase 4 (433 aa).

A disordered region spans residues 1–20 (MAPAGRKLQHESRCRPSRPV). The Cytoplasmic portion of the chain corresponds to 1–54 (MAPAGRKLQHESRCRPSRPVDAWRAAATTRGRCMGTPGARRTARRGGWGLPRTS). Residues 55-74 (SGLAAAGLLCTALTACLCWG) traverse the membrane as a helical; Signal-anchor for type II membrane protein segment. Over 75-433 (QLPPLPWASP…IHNLADWFQR (359 aa)) the chain is Lumenal. N-linked (GlcNAc...) asparagine glycans are attached at residues Asn117 and Asn218.

This sequence belongs to the glycosyltransferase 10 family. In adult, highest expression in spleen, testis, brain, lung, kidney and skeletal muscle and to a lesser extent in liver and heart.

It localises to the golgi apparatus. The protein resides in the golgi stack membrane. It catalyses the reaction a beta-D-galactosyl-(1-&gt;4)-N-acetyl-beta-D-glucosaminyl derivative + GDP-beta-L-fucose = a beta-D-galactosyl-(1-&gt;4)-[alpha-L-fucosyl-(1-&gt;3)]-N-acetyl-beta-D-glucosaminyl derivative + GDP + H(+). It carries out the reaction an N-acetyl-alpha-neuraminyl-(2-&gt;3)-beta-D-galactosyl-(1-&gt;4)-N-acetyl-beta-D-glucosaminyl derivative + GDP-beta-L-fucose = an alpha-Neu5Ac-(2-&gt;3)-beta-D-Gal-(1-&gt;4)-[alpha-L-Fuc-(1-&gt;3)]-beta-D-GlcNAc derivative + GDP + H(+). The enzyme catalyses an alpha-Neu5Ac-(2-&gt;3)-beta-D-Gal-(1-&gt;4)-beta-D-GlcNAc-(1-&gt;3)-beta-D-Gal-(1-&gt;4)-beta-D-GlcNAc derivative + GDP-beta-L-fucose = an alpha-Neu5Ac-(2-&gt;3)-beta-D-Gal-(1-&gt;4)-beta-D-GlcNAc-(1-&gt;3)-beta-D-Gal-(1-&gt;4)-[alpha-L-Fuc-(1-&gt;3)]-beta-D-GlcNAc derivative + GDP + H(+). The catalysed reaction is an alpha-Neu5Ac-(2-&gt;3)-beta-D-Gal-(1-&gt;4)-beta-D-GlcNAc6S derivative + GDP-beta-L-fucose = an alpha-Neu5Ac-(2-&gt;3)-beta-D-Gal-(1-&gt;4)-[alpha-L-Fuc-(1-&gt;3)]-beta-D-GlcNAc6S derivative + GDP + H(+). The protein operates within protein modification; protein glycosylation. Functionally, catalyzes alpha(1-&gt;3) linkage of fucosyl moiety transferred from GDP-beta-L-fucose to N-acetyl glucosamine (GlcNAc) within type 2 lactosamine (LacNAc, Gal-beta(1-&gt;4)GlcNAc) glycan attached to N- or O-linked glycoproteins. Robustly fucosylates nonsialylated distal LacNAc unit of the polylactosamine chain to form Lewis X antigen (CD15), a glycan determinant known to mediate important cellular functions in development and immunity. Fucosylates with lower efficiency sialylated LacNAc acceptors to form sialyl Lewis X and 6-sulfo sialyl Lewis X determinants that serve as recognition epitopes for C-type lectins. Together with FUT7 contributes to SELE, SELL and SELP selectin ligand biosynthesis and selectin-dependent lymphocyte homing, leukocyte migration and blood leukocyte homeostasis. In a cell type specific manner, may also fucosylate the internal LacNAc unit of the polylactosamine chain to form VIM-2 antigen that serves as recognition epitope for SELE. The sequence is that of Alpha-(1,3)-fucosyltransferase 4 (Fut4) from Rattus norvegicus (Rat).